The sequence spans 822 residues: Penicillin-binding protein 1A (822 aa).

Topologically, residues 1 to 5 are cytoplasmic; sequence MRLLK. Residues 6–26 form a helical; Signal-anchor for type II membrane protein membrane-spanning segment; that stretch reads FLWWTCVTLICGVLLSFSGAY. Topologically, residues 27–822 are periplasmic; the sequence is LYLSPSLPSV…DDEGAPIDLF (796 aa). The transglycosylase stretch occupies residues 48 to 216; that stretch reads LKVYSEDGKL…SRYNPLVNPT (169 aa). The active-site Proton donor; for transglycosylase activity is E86. Residues 403–744 form a transpeptidase region; that stretch reads IRVQRQEDGT…GTVALPIWIR (342 aa). The active-site Acyl-ester intermediate; for transpeptidase activity is S461. 2 disordered regions span residues 614–654 and 790–822; these read AADA…FEPT and KNED…IDLF. Over residues 812–822 the composition is skewed to acidic residues; it reads PDDEGAPIDLF.

It in the N-terminal section; belongs to the glycosyltransferase 51 family. In the C-terminal section; belongs to the transpeptidase family.

The protein localises to the cell inner membrane. It carries out the reaction [GlcNAc-(1-&gt;4)-Mur2Ac(oyl-L-Ala-gamma-D-Glu-L-Lys-D-Ala-D-Ala)](n)-di-trans,octa-cis-undecaprenyl diphosphate + beta-D-GlcNAc-(1-&gt;4)-Mur2Ac(oyl-L-Ala-gamma-D-Glu-L-Lys-D-Ala-D-Ala)-di-trans,octa-cis-undecaprenyl diphosphate = [GlcNAc-(1-&gt;4)-Mur2Ac(oyl-L-Ala-gamma-D-Glu-L-Lys-D-Ala-D-Ala)](n+1)-di-trans,octa-cis-undecaprenyl diphosphate + di-trans,octa-cis-undecaprenyl diphosphate + H(+). It catalyses the reaction Preferential cleavage: (Ac)2-L-Lys-D-Ala-|-D-Ala. Also transpeptidation of peptidyl-alanyl moieties that are N-acyl substituents of D-alanine.. Its pathway is cell wall biogenesis; peptidoglycan biosynthesis. Cell wall formation. Synthesis of cross-linked peptidoglycan from the lipid intermediates. The enzyme has a penicillin-insensitive transglycosylase N-terminal domain (formation of linear glycan strands) and a penicillin-sensitive transpeptidase C-terminal domain (cross-linking of the peptide subunits). The chain is Penicillin-binding protein 1A (mrcA) from Pseudomonas aeruginosa (strain ATCC 15692 / DSM 22644 / CIP 104116 / JCM 14847 / LMG 12228 / 1C / PRS 101 / PAO1).